Consider the following 214-residue polypeptide: Orotate phosphoribosyltransferase (214 aa).

5-phospho-alpha-D-ribose 1-diphosphate is bound by residues Arg-125, Lys-126, Lys-129, His-131, and 151-159 (EDTSTTGNS). Residues Thr-155 and Arg-183 each contribute to the orotate site.

This sequence belongs to the purine/pyrimidine phosphoribosyltransferase family. PyrE subfamily. As to quaternary structure, homodimer. Mg(2+) is required as a cofactor.

The catalysed reaction is orotidine 5'-phosphate + diphosphate = orotate + 5-phospho-alpha-D-ribose 1-diphosphate. Its pathway is pyrimidine metabolism; UMP biosynthesis via de novo pathway; UMP from orotate: step 1/2. Its function is as follows. Catalyzes the transfer of a ribosyl phosphate group from 5-phosphoribose 1-diphosphate to orotate, leading to the formation of orotidine monophosphate (OMP). The sequence is that of Orotate phosphoribosyltransferase from Tropheryma whipplei (strain TW08/27) (Whipple's bacillus).